The following is a 128-amino-acid chain: S-adenosylmethionine decarboxylase proenzyme (128 aa).

The active-site Schiff-base intermediate with substrate; via pyruvic acid is Ser61. Ser61 is modified (pyruvic acid (Ser); by autocatalysis). The active-site Proton acceptor; for processing activity is His66. Cys81 serves as the catalytic Proton donor; for catalytic activity.

The protein belongs to the prokaryotic AdoMetDC family. Type 1 subfamily. Heterotetramer of two alpha and two beta chains arranged as a dimer of alpha/beta heterodimers. Requires pyruvate as cofactor. Post-translationally, is synthesized initially as an inactive proenzyme. Formation of the active enzyme involves a self-maturation process in which the active site pyruvoyl group is generated from an internal serine residue via an autocatalytic post-translational modification. Two non-identical subunits are generated from the proenzyme in this reaction, and the pyruvate is formed at the N-terminus of the alpha chain, which is derived from the carboxyl end of the proenzyme. The post-translation cleavage follows an unusual pathway, termed non-hydrolytic serinolysis, in which the side chain hydroxyl group of the serine supplies its oxygen atom to form the C-terminus of the beta chain, while the remainder of the serine residue undergoes an oxidative deamination to produce ammonia and the pyruvoyl group blocking the N-terminus of the alpha chain.

The enzyme catalyses S-adenosyl-L-methionine + H(+) = S-adenosyl 3-(methylsulfanyl)propylamine + CO2. The protein operates within amine and polyamine biosynthesis; S-adenosylmethioninamine biosynthesis; S-adenosylmethioninamine from S-adenosyl-L-methionine: step 1/1. Its function is as follows. Catalyzes the decarboxylation of S-adenosylmethionine to S-adenosylmethioninamine (dcAdoMet), the propylamine donor required for the synthesis of the polyamines spermine and spermidine from the diamine putrescine. The protein is S-adenosylmethionine decarboxylase proenzyme of Synechococcus sp. (strain WH7803).